A 106-amino-acid polypeptide reads, in one-letter code: uncharacterized protein (106 aa).

The protein to the N-terminal of E.carotovora exoenzyme regulation regulon ORF1. The C-terminal part is colinear with YqcB. It to E.coli YqcC.

This is an uncharacterized protein from Haemophilus influenzae (strain ATCC 51907 / DSM 11121 / KW20 / Rd).